The following is a 1020-amino-acid chain: Vacuolar membrane protease (1020 aa).

Residues 1 to 11 (MKCHNPFGFRV) lie on the Cytoplasmic side of the membrane. Residues 12–32 (GPVTFWTIIIYLALLVPLLWI) traverse the membrane as a helical segment. Residues 33-410 (HETVPPAPSS…GFAVFGLRGL (378 aa)) lie on the Vacuolar side of the membrane. N-linked (GlcNAc...) asparagine glycosylation is found at N50, N94, and N130. Zn(2+) contacts are provided by H191 and D203. E237 serves as the catalytic Proton acceptor. Zn(2+) is bound by residues E238, E263, and H336. Residues 411–431 (FAWSLTLLIVSPLILAILVFI) form a helical membrane-spanning segment. The Cytoplasmic segment spans residues 432–467 (LNRHDKLYFFSRKINVHNEGSEDPVSIGGFRGFTRF). The chain crosses the membrane as a helical span at residues 468-488 (PIAVGFSGALTLASAFLLTKI). Over 489-491 (NPM) the chain is Vacuolar. A helical membrane pass occupies residues 492 to 512 (IVYSSEYAVWGMMLSLFYVSL). The Cytoplasmic portion of the chain corresponds to 513–529 (WMTLKGSSAVRPSALQR). A helical membrane pass occupies residues 530–550 (GYIHIWLFIVSWGLLIVVAVT). The Vacuolar portion of the chain corresponds to 551–561 (EDRLKIASGYP). Residues 562-582 (VVFLHSALFLSTVISFLELFG) form a helical membrane-spanning segment. Residues 583–690 (LTKKHDYARR…RLPGWTWILQ (108 aa)) lie on the Cytoplasmic side of the membrane. The segment at 609–648 (DDALIAPDTPNDEAEDSDGEDSEHEPTETTPLRAGGDSRV) is disordered. The segment covering 618 to 631 (PNDEAEDSDGEDSE) has biased composition (acidic residues). The chain crosses the membrane as a helical span at residues 691–711 (FLLLAPINVILWGQIGLFAVA). The Vacuolar portion of the chain corresponds to 712 to 724 (ATQAGGADGGSVL). A helical transmembrane segment spans residues 725-745 (TTYLIIAVLSIVILVPLAPFI). Topologically, residues 746–750 (HRVHY) are cytoplasmic. The helical transmembrane segment at 751-771 (YVPIILFAAFAGTLIYNLIAF) threads the bilayer. The Vacuolar portion of the chain corresponds to 772-1020 (PFSANNRYKI…VGLVRPVKRF (249 aa)). N-linked (GlcNAc...) asparagine glycosylation is found at N851, N868, and N873.

It belongs to the peptidase M28 family. Requires Zn(2+) as cofactor.

It localises to the vacuole membrane. Functionally, may be involved in vacuolar sorting and osmoregulation. The chain is Vacuolar membrane protease from Verticillium alfalfae (strain VaMs.102 / ATCC MYA-4576 / FGSC 10136) (Verticillium wilt of alfalfa).